The following is a 548-amino-acid chain: Uridine-cytidine kinase-like 1 (548 aa).

Residues 1-18 show a composition bias toward low complexity; sequence MAAPPASMSAAPSPLQSA. A disordered region spans residues 1–74; it reads MAAPPASMSA…CKSEPPLLRT (74 aa). Phosphoserine is present on residues serine 56 and serine 63. An ATP-binding site is contributed by 105-112; sequence GGSASGKT. Serine 539 bears the Phosphoserine mark.

The protein belongs to the uridine kinase family. In terms of assembly, interacts with RNF19B. Post-translationally, ubiquitinated by RNF19B; which induces proteasomal degradation.

The protein resides in the cytoplasm. Its subcellular location is the nucleus. It carries out the reaction uridine + ATP = UMP + ADP + H(+). The catalysed reaction is cytidine + ATP = CMP + ADP + H(+). The protein operates within pyrimidine metabolism; UMP biosynthesis via salvage pathway; UMP from uridine: step 1/1. In terms of biological role, may contribute to UTP accumulation needed for blast transformation and proliferation. In Mus musculus (Mouse), this protein is Uridine-cytidine kinase-like 1 (Uckl1).